Consider the following 302-residue polypeptide: Homoserine kinase (302 aa).

ATP is bound at residue 92–102; the sequence is PLARGLGSSAT.

Belongs to the GHMP kinase family. Homoserine kinase subfamily.

Its subcellular location is the cytoplasm. It carries out the reaction L-homoserine + ATP = O-phospho-L-homoserine + ADP + H(+). It participates in amino-acid biosynthesis; L-threonine biosynthesis; L-threonine from L-aspartate: step 4/5. Its function is as follows. Catalyzes the ATP-dependent phosphorylation of L-homoserine to L-homoserine phosphate. This chain is Homoserine kinase, found in Trichormus variabilis (strain ATCC 29413 / PCC 7937) (Anabaena variabilis).